The sequence spans 600 residues: Proline--tRNA ligase (600 aa).

It belongs to the class-II aminoacyl-tRNA synthetase family. ProS type 1 subfamily. As to quaternary structure, homodimer.

It localises to the cytoplasm. It catalyses the reaction tRNA(Pro) + L-proline + ATP = L-prolyl-tRNA(Pro) + AMP + diphosphate. Catalyzes the attachment of proline to tRNA(Pro) in a two-step reaction: proline is first activated by ATP to form Pro-AMP and then transferred to the acceptor end of tRNA(Pro). As ProRS can inadvertently accommodate and process non-cognate amino acids such as alanine and cysteine, to avoid such errors it has two additional distinct editing activities against alanine. One activity is designated as 'pretransfer' editing and involves the tRNA(Pro)-independent hydrolysis of activated Ala-AMP. The other activity is designated 'posttransfer' editing and involves deacylation of mischarged Ala-tRNA(Pro). The misacylated Cys-tRNA(Pro) is not edited by ProRS. The polypeptide is Proline--tRNA ligase (Prochlorococcus marinus (strain MIT 9312)).